The chain runs to 453 residues: Pup--protein ligase (453 aa).

A Mg(2+)-binding site is contributed by Glu-9. Position 53 (Arg-53) interacts with ATP. Mg(2+) is bound at residue Tyr-55. Residue Asp-57 is the Proton acceptor of the active site. Residue Glu-63 participates in Mg(2+) binding. Positions 66 and 420 each coordinate ATP.

This sequence belongs to the Pup ligase/Pup deamidase family. Pup-conjugating enzyme subfamily.

The enzyme catalyses ATP + [prokaryotic ubiquitin-like protein]-L-glutamate + [protein]-L-lysine = ADP + phosphate + N(6)-([prokaryotic ubiquitin-like protein]-gamma-L-glutamyl)-[protein]-L-lysine.. It participates in protein degradation; proteasomal Pup-dependent pathway. Its pathway is protein modification; protein pupylation. Its function is as follows. Catalyzes the covalent attachment of the prokaryotic ubiquitin-like protein modifier Pup to the proteasomal substrate proteins, thereby targeting them for proteasomal degradation. This tagging system is termed pupylation. The ligation reaction involves the side-chain carboxylate of the C-terminal glutamate of Pup and the side-chain amino group of a substrate lysine. The sequence is that of Pup--protein ligase from Kineococcus radiotolerans (strain ATCC BAA-149 / DSM 14245 / SRS30216).